The chain runs to 1203 residues: Cation-transporting ATPase catp-5 (1203 aa).

The Cytoplasmic portion of the chain corresponds to 1–68 (MNTSEREPLL…YAYKETIGRQ (68 aa)). Positions 21–42 (TTDNPSTKIMKREKDNPKAKTT) are disordered. Residues 69–89 (ILFWLLTIVTLGFYQLLAYWV) traverse the membrane as a helical segment. The Extracellular portion of the chain corresponds to 90-209 (KSLFVKVRFQ…RKIYNMNALA (120 aa)). The chain crosses the membrane as a helical span at residues 210 to 230 (LALTPILVILFKEVLGPFYLF). At 231-242 (QCFSVALWYSDN) the chain is on the cytoplasmic side. A helical membrane pass occupies residues 243-263 (YAYYASVIVIITVGSAAVAVY). The Extracellular segment spans residues 264–297 (QMRAQEKRIRNMVGDTISVIVRRDGHDITIDASE). A helical membrane pass occupies residues 298–318 (IVPMDILILPSNTFILPCDCL). The Cytoplasmic segment spans residues 319-414 (LMNGTVIVNE…KPQEKEALKD (96 aa)). A helical membrane pass occupies residues 415 to 435 (VMVFILVLGFIALIGFIYTVI). Residues 436 to 451 (EMVSRGESLKHIIIRS) lie on the Extracellular side of the membrane. The chain crosses the membrane as a helical span at residues 452 to 472 (LDIITIVVPPALPAAMSVGII). Residues 473–935 (NANSRLKKKK…KEGRCALVTS (463 aa)) lie on the Cytoplasmic side of the membrane. The active-site 4-aspartylphosphate intermediate is D503. A disordered region spans residues 595–617 (ETQDFDTVQPTVLRPPPEQATYH). Mg(2+) is bound by residues D883 and D887. A helical membrane pass occupies residues 936–956 (YAVSKYMAAYSLNEFLSVMLL). The Extracellular segment spans residues 957-962 (YNDGTN). The helical transmembrane segment at 963–983 (ISDGQFLYIDLVLITLVALFL) threads the bilayer. The Cytoplasmic segment spans residues 984-1007 (GNTEASRKLSGIPPPRRLATSAFY). The helical transmembrane segment at 1008–1028 (FSVFGQMFFNIITQTTGYLLV) threads the bilayer. The Extracellular portion of the chain corresponds to 1029–1046 (RGQSWYVPNPEELDNTTT). Residues 1047 to 1067 (MIGTTVFFTSCCMYLGYAFVY) traverse the membrane as a helical segment. The Cytoplasmic portion of the chain corresponds to 1068–1085 (SKGHPYRRSVFTNWLLCG). A helical membrane pass occupies residues 1086–1106 (IIFVIGAINMVMIFTNMGFLM). The Extracellular segment spans residues 1107–1120 (NLMGFVYVPSTSMR). Residues 1121–1141 (FILLAISLAGVFLSLLYEHFF) form a helical membrane-spanning segment. Residues 1142–1203 (VEKVVAIHFE…DRKETIESKC (62 aa)) lie on the Cytoplasmic side of the membrane.

The protein belongs to the cation transport ATPase (P-type) (TC 3.A.3) family. Type V subfamily. In terms of tissue distribution, expressed in the 20 intestinal cells and in the excretory cell.

It localises to the apical cell membrane. The catalysed reaction is ATP + H2O = ADP + phosphate + H(+). In terms of biological role, involved in the uptake and/or transport of polyamines, probably through ATP hydrolysis. This contributes to the maintenance of intracellular polyamine levels. Polyamines are essential for cell proliferation and are implicated in cellular processes, ranging from DNA replication to apoptosis. The polypeptide is Cation-transporting ATPase catp-5 (Caenorhabditis elegans).